The following is a 272-amino-acid chain: Probable feruloyl esterase C (272 aa).

Positions 1 to 22 are cleaved as a signal peptide; the sequence is MVPTMIYSAILALSAFTPSVLA.

This sequence belongs to the faeC family.

The protein resides in the secreted. It carries out the reaction feruloyl-polysaccharide + H2O = ferulate + polysaccharide.. Involved in degradation of plant cell walls. Hydrolyzes the feruloyl-arabinose ester bond in arabinoxylans, and the feruloyl-galactose ester bond in pectin. Active against paranitrophenyl-acetate, methyl ferulate and wheat arabinoxylan. The sequence is that of Probable feruloyl esterase C (faeC) from Neosartorya fischeri (strain ATCC 1020 / DSM 3700 / CBS 544.65 / FGSC A1164 / JCM 1740 / NRRL 181 / WB 181) (Aspergillus fischerianus).